Reading from the N-terminus, the 578-residue chain is CTP synthase 2 (578 aa).

The Glutamine amidotransferase type-1 domain maps to 305–564 (KIALVGKYTN…VAAASGTLGE (260 aa)). Active-site for GATase activity residues include Cys404, His537, and Glu539.

The protein belongs to the CTP synthase family. As to quaternary structure, homodimer. Oligomerizes to a tetramer in the presence of its substrates UTP and ATP. The cofactor is Mg(2+).

Its subcellular location is the cytoplasm. It catalyses the reaction UTP + L-glutamine + ATP + H2O = CTP + L-glutamate + ADP + phosphate + 2 H(+). Its pathway is pyrimidine metabolism; CTP biosynthesis via de novo pathway; CTP from UDP: step 2/2. Its activity is regulated as follows. Activated by GTP. Subject to allosteric product inhibition by CTP. Inhibited by p-chloromercuriphenylsulfonic acid, N-ethylmaleimide and cyclopentenylcytosine (CPEC). In terms of biological role, catalyzes the ATP-dependent amination of UTP to CTP with either L-glutamine or ammonia as the source of nitrogen. Plays an important role in the regulation of phospholipid synthesis. The protein is CTP synthase 2 (URA8) of Saccharomyces cerevisiae (strain ATCC 204508 / S288c) (Baker's yeast).